The chain runs to 681 residues: PTS system glucose-specific EIICBA component (681 aa).

One can recognise a PTS EIIC type-1 domain in the interval 3–414 (KKLFGQLQRI…LKYKTPGRED (412 aa)). 10 helical membrane passes run 16–36 (LMLP…GTAM), 73–93 (MIFA…AAIA), 126–146 (ILGI…GALA), 170–190 (FVPI…ALIW), 199–219 (AFST…FGFI), 273–293 (FMQG…LAIY), 303–323 (VVAG…ITEP), 328–348 (FLFV…LSFL), 355–375 (LHLG…GILP), and 383–403 (VIPV…FLIV). Residues 425 to 506 (TELPYAVLEA…QQIMNGQVVE (82 aa)) enclose the PTS EIIB type-1 domain. Cys447 serves as the catalytic Phosphocysteine intermediate; for EIIB activity. One can recognise a PTS EIIA type-1 domain in the interval 551 to 655 (DQVFSEKMMG…SDITPIIVTQ (105 aa)). His603 functions as the Tele-phosphohistidine intermediate; for EIIA activity in the catalytic mechanism.

The protein localises to the cell membrane. It catalyses the reaction N(pros)-phospho-L-histidyl-[protein] + D-glucose(out) = D-glucose 6-phosphate(in) + L-histidyl-[protein]. The phosphoenolpyruvate-dependent sugar phosphotransferase system (sugar PTS), a major carbohydrate active transport system, catalyzes the phosphorylation of incoming sugar substrates concomitantly with their translocation across the cell membrane. This system is involved in glucose transport. This chain is PTS system glucose-specific EIICBA component (ptsG), found in Staphylococcus aureus (strain NCTC 8325 / PS 47).